The primary structure comprises 232 residues: uncharacterized protein (232 aa).

The disordered stretch occupies residues Met-1–Asp-71. Over residues Asp-25–Asp-38 the composition is skewed to acidic residues. The segment covering Lys-44–Asp-71 has biased composition (basic and acidic residues).

This is an uncharacterized protein from Schizosaccharomyces pombe (strain 972 / ATCC 24843) (Fission yeast).